Reading from the N-terminus, the 153-residue chain is Histone H2B.10 (153 aa).

2 stretches are compositionally biased toward basic and acidic residues: residues 1 to 28 (MAPKAEKKPAAKKPAEEEPAAEKAEKAP) and 36 to 53 (EKRLPAGKAEKSSGEGKK). A disordered region spans residues 1-61 (MAPKAEKKPA…KKAGRKKAKK (61 aa)). An N6-acetyllysine mark is found at K7 and K37. K149 is covalently cross-linked (Glycyl lysine isopeptide (Lys-Gly) (interchain with G-Cter in ubiquitin)).

It belongs to the histone H2B family. In terms of assembly, the nucleosome is a histone octamer containing two molecules each of H2A, H2B, H3 and H4 assembled in one H3-H4 heterotetramer and two H2A-H2B heterodimers. The octamer wraps approximately 147 bp of DNA. Post-translationally, can be acetylated to form H2BK6ac and H2BK33ac. In terms of processing, monoubiquitinated by BRE1 to form H2BK143ub1 and deubiquitinated by UBP26. Required for heterochromatic histone H3 di- and trimethylation at H3K4me. May give a specific tag for epigenetic transcriptional activation.

The protein resides in the nucleus. Its subcellular location is the chromosome. Core component of nucleosome. Nucleosomes wrap and compact DNA into chromatin, limiting DNA accessibility to the cellular machineries which require DNA as a template. Histones thereby play a central role in transcription regulation, DNA repair, DNA replication and chromosomal stability. DNA accessibility is regulated via a complex set of post-translational modifications of histones, also called histone code, and nucleosome remodeling. This chain is Histone H2B.10 (H2B.10), found in Oryza sativa subsp. indica (Rice).